The sequence spans 508 residues: Maturase K (508 aa).

Belongs to the intron maturase 2 family. MatK subfamily.

Its subcellular location is the plastid. It localises to the chloroplast. In terms of biological role, usually encoded in the trnK tRNA gene intron. Probably assists in splicing its own and other chloroplast group II introns. The sequence is that of Maturase K from Chaetosphaeridium globosum (Charophycean green alga).